The chain runs to 128 residues: Aspartate 1-decarboxylase (128 aa).

Ser25 acts as the Schiff-base intermediate with substrate; via pyruvic acid in catalysis. A Pyruvic acid (Ser) modification is found at Ser25. Position 57 (Thr57) interacts with substrate. Residue Tyr58 is the Proton donor of the active site. 73–75 lines the substrate pocket; sequence GSA.

This sequence belongs to the PanD family. In terms of assembly, heterooctamer of four alpha and four beta subunits. The cofactor is pyruvate. Is synthesized initially as an inactive proenzyme, which is activated by self-cleavage at a specific serine bond to produce a beta-subunit with a hydroxyl group at its C-terminus and an alpha-subunit with a pyruvoyl group at its N-terminus.

It localises to the cytoplasm. The catalysed reaction is L-aspartate + H(+) = beta-alanine + CO2. It functions in the pathway cofactor biosynthesis; (R)-pantothenate biosynthesis; beta-alanine from L-aspartate: step 1/1. In terms of biological role, catalyzes the pyruvoyl-dependent decarboxylation of aspartate to produce beta-alanine. The chain is Aspartate 1-decarboxylase from Paraburkholderia phymatum (strain DSM 17167 / CIP 108236 / LMG 21445 / STM815) (Burkholderia phymatum).